We begin with the raw amino-acid sequence, 286 residues long: 33 kDa chaperonin (286 aa).

Intrachain disulfides connect Cys225/Cys227 and Cys258/Cys261.

The protein belongs to the HSP33 family. In terms of processing, under oxidizing conditions two disulfide bonds are formed involving the reactive cysteines. Under reducing conditions zinc is bound to the reactive cysteines and the protein is inactive.

It localises to the cytoplasm. In terms of biological role, redox regulated molecular chaperone. Protects both thermally unfolding and oxidatively damaged proteins from irreversible aggregation. Plays an important role in the bacterial defense system toward oxidative stress. The chain is 33 kDa chaperonin from Shewanella oneidensis (strain ATCC 700550 / JCM 31522 / CIP 106686 / LMG 19005 / NCIMB 14063 / MR-1).